The primary structure comprises 406 residues: Serine/threonine transporter SstT (406 aa).

The next 9 membrane-spanning stretches (helical) occupy residues 11–31 (IGLVPLIIVGLVLGILIGWLM), 45–65 (FVGALKAVAPILVFILVMAAI), 79–99 (VLIMYIFGTFLAALTAVVASF), 141–161 (AIANANYMGILAWALIIGLAL), 185–205 (FVIAFAPIGILGLVANTIAET), 216–236 (LLTILVGCMLFIALVVNPIIV), 298–318 (MAGAAITINVLTLAAAHTLGV), 330–350 (VVATVAACGASGVAGGSLLLI), and 357–377 (FNIPNDIAMQVVAIGFIIGVV).

It belongs to the dicarboxylate/amino acid:cation symporter (DAACS) (TC 2.A.23) family.

It is found in the cell inner membrane. It catalyses the reaction L-serine(in) + Na(+)(in) = L-serine(out) + Na(+)(out). The enzyme catalyses L-threonine(in) + Na(+)(in) = L-threonine(out) + Na(+)(out). Its function is as follows. Involved in the import of serine and threonine into the cell, with the concomitant import of sodium (symport system). This is Serine/threonine transporter SstT from Psychrobacter sp. (strain PRwf-1).